Reading from the N-terminus, the 89-residue chain is Small ribosomal subunit protein bS18 (89 aa).

The protein belongs to the bacterial ribosomal protein bS18 family. Part of the 30S ribosomal subunit. Forms a tight heterodimer with protein bS6.

Functionally, binds as a heterodimer with protein bS6 to the central domain of the 16S rRNA, where it helps stabilize the platform of the 30S subunit. The chain is Small ribosomal subunit protein bS18 from Phocaeicola vulgatus (strain ATCC 8482 / DSM 1447 / JCM 5826 / CCUG 4940 / NBRC 14291 / NCTC 11154) (Bacteroides vulgatus).